Reading from the N-terminus, the 525-residue chain is Apolipoprotein N-acyltransferase 2 (525 aa).

A run of 6 helical transmembrane segments spans residues 25–45 (ILNF…YYAL), 56–76 (FLYG…LAFF), 81–101 (IFTL…FGFL), 115–135 (FFFA…FLAY), 153–173 (FVDI…AACL), and 200–220 (LIFT…ILSI). Residues 228 to 486 (LNTVIVQQNT…AESVYTEVPV (259 aa)) form the CN hydrolase domain. Catalysis depends on E274, which acts as the Proton acceptor. K339 is an active-site residue. The active-site Nucleophile is C397. A helical membrane pass occupies residues 495–515 (ASYKDWLPIMMFLILIFNIFL).

The protein belongs to the CN hydrolase family. Apolipoprotein N-acyltransferase subfamily.

The protein localises to the cell inner membrane. The catalysed reaction is N-terminal S-1,2-diacyl-sn-glyceryl-L-cysteinyl-[lipoprotein] + a glycerophospholipid = N-acyl-S-1,2-diacyl-sn-glyceryl-L-cysteinyl-[lipoprotein] + a 2-acyl-sn-glycero-3-phospholipid + H(+). The protein operates within protein modification; lipoprotein biosynthesis (N-acyl transfer). Functionally, catalyzes the phospholipid dependent N-acylation of the N-terminal cysteine of apolipoprotein, the last step in lipoprotein maturation. The chain is Apolipoprotein N-acyltransferase 2 from Treponema denticola (strain ATCC 35405 / DSM 14222 / CIP 103919 / JCM 8153 / KCTC 15104).